The chain runs to 292 residues: Formamidopyrimidine-DNA glycosylase (292 aa).

The active-site Schiff-base intermediate with DNA is the proline 2. The active-site Proton donor is glutamate 3. Lysine 61 serves as the catalytic Proton donor; for beta-elimination activity. DNA-binding residues include histidine 103, arginine 122, and lysine 168. The FPG-type zinc-finger motif lies at 254-288 (DAYGREGEHCRRCGAVMRREKFMNRSSFYCPRCQP). Catalysis depends on arginine 278, which acts as the Proton donor; for delta-elimination activity.

Belongs to the FPG family. In terms of assembly, monomer. The cofactor is Zn(2+).

It carries out the reaction Hydrolysis of DNA containing ring-opened 7-methylguanine residues, releasing 2,6-diamino-4-hydroxy-5-(N-methyl)formamidopyrimidine.. The enzyme catalyses 2'-deoxyribonucleotide-(2'-deoxyribose 5'-phosphate)-2'-deoxyribonucleotide-DNA = a 3'-end 2'-deoxyribonucleotide-(2,3-dehydro-2,3-deoxyribose 5'-phosphate)-DNA + a 5'-end 5'-phospho-2'-deoxyribonucleoside-DNA + H(+). Involved in base excision repair of DNA damaged by oxidation or by mutagenic agents. Acts as a DNA glycosylase that recognizes and removes damaged bases. Has a preference for oxidized purines, such as 7,8-dihydro-8-oxoguanine (8-oxoG). Has AP (apurinic/apyrimidinic) lyase activity and introduces nicks in the DNA strand. Cleaves the DNA backbone by beta-delta elimination to generate a single-strand break at the site of the removed base with both 3'- and 5'-phosphates. This is Formamidopyrimidine-DNA glycosylase from Mycobacterium ulcerans (strain Agy99).